The following is a 393-amino-acid chain: Homoserine O-succinyltransferase (393 aa).

The region spanning 62–372 (NAVLVCHALN…PHGHDAFLLD (311 aa)) is the AB hydrolase-1 domain. S168 acts as the Nucleophile in catalysis. A substrate-binding site is contributed by R238. Catalysis depends on residues D333 and H366. D367 is a substrate binding site.

Belongs to the AB hydrolase superfamily. MetX family. As to quaternary structure, homodimer.

It is found in the cytoplasm. The enzyme catalyses L-homoserine + succinyl-CoA = O-succinyl-L-homoserine + CoA. Its pathway is amino-acid biosynthesis; L-methionine biosynthesis via de novo pathway; O-succinyl-L-homoserine from L-homoserine: step 1/1. In terms of biological role, transfers a succinyl group from succinyl-CoA to L-homoserine, forming succinyl-L-homoserine. This Cupriavidus necator (strain ATCC 17699 / DSM 428 / KCTC 22496 / NCIMB 10442 / H16 / Stanier 337) (Ralstonia eutropha) protein is Homoserine O-succinyltransferase.